Consider the following 686-residue polypeptide: U-box domain-containing protein 19 (686 aa).

One can recognise a U-box domain in the interval 277-351 (LNVDDLRCPI…QSYSKQNGVV (75 aa)). ARM repeat units lie at residues 406-445 (TFYRSCLVEAGVVESLMKILRSDDPRIQENAMAGIMNLSK), 448-489 (AGKT…YLSS), 491-533 (GDYS…SLLM), 536-577 (PDNH…KMAE), and 579-620 (PDGM…NLCH).

It carries out the reaction S-ubiquitinyl-[E2 ubiquitin-conjugating enzyme]-L-cysteine + [acceptor protein]-L-lysine = [E2 ubiquitin-conjugating enzyme]-L-cysteine + N(6)-ubiquitinyl-[acceptor protein]-L-lysine.. It functions in the pathway protein modification; protein ubiquitination. Its function is as follows. Functions as an E3 ubiquitin ligase. The polypeptide is U-box domain-containing protein 19 (PUB19) (Arabidopsis thaliana (Mouse-ear cress)).